The primary structure comprises 407 residues: Dephospho-CoA kinase (407 aa).

One can recognise a DPCK domain in the interval 3–204 (RIGLTGGIGA…QPFAHNLAQR (202 aa)). An ATP-binding site is contributed by 11–16 (GAGKSL). The interval 196–407 (PFAHNLAQRQ…EWADAVHWRP (212 aa)) is UPF0157.

The protein in the N-terminal section; belongs to the CoaE family. This sequence in the C-terminal section; belongs to the UPF0157 (GrpB) family.

The protein localises to the cytoplasm. It carries out the reaction 3'-dephospho-CoA + ATP = ADP + CoA + H(+). The protein operates within cofactor biosynthesis; coenzyme A biosynthesis; CoA from (R)-pantothenate: step 5/5. In terms of biological role, catalyzes the phosphorylation of the 3'-hydroxyl group of dephosphocoenzyme A to form coenzyme A. In Mycobacterium bovis (strain ATCC BAA-935 / AF2122/97), this protein is Dephospho-CoA kinase.